We begin with the raw amino-acid sequence, 316 residues long: Transaldolase (316 aa).

Residue Lys132 is the Schiff-base intermediate with substrate of the active site.

Belongs to the transaldolase family. Type 1 subfamily. Homodimer.

Its subcellular location is the cytoplasm. It carries out the reaction D-sedoheptulose 7-phosphate + D-glyceraldehyde 3-phosphate = D-erythrose 4-phosphate + beta-D-fructose 6-phosphate. Its pathway is carbohydrate degradation; pentose phosphate pathway; D-glyceraldehyde 3-phosphate and beta-D-fructose 6-phosphate from D-ribose 5-phosphate and D-xylulose 5-phosphate (non-oxidative stage): step 2/3. Its function is as follows. Transaldolase is important for the balance of metabolites in the pentose-phosphate pathway. The protein is Transaldolase of Methylobacillus flagellatus (strain ATCC 51484 / DSM 6875 / VKM B-1610 / KT).